An 87-amino-acid polypeptide reads, in one-letter code: Toxin Cll5b (87 aa).

The first 19 residues, 1–19 (MNSLLMITACLAEIGTVWA), serve as a signal peptide directing secretion. In terms of domain architecture, LCN-type CS-alpha/beta spans 20-85 (KEGYLVNKST…TYPLPNKSCS (66 aa)). Intrachain disulfides connect C31/C84, C35/C60, C44/C65, and C48/C67. Positions 86-87 (KK) are cleaved as a propeptide — removed by a carboxypeptidase.

The protein belongs to the long (4 C-C) scorpion toxin superfamily. Sodium channel inhibitor family. Beta subfamily. As to expression, expressed by the venom gland.

It localises to the secreted. Its function is as follows. Beta toxins bind voltage-independently at site-4 of sodium channels (Nav) and shift the voltage of activation toward more negative potentials thereby affecting sodium channel activation and promoting spontaneous and repetitive firing. This chain is Toxin Cll5b, found in Centruroides limpidus (Mexican scorpion).